Here is a 217-residue protein sequence, read N- to C-terminus: Cysteine-rich protein 3 (217 aa).

One can recognise an LIM zinc-binding 1 domain in the interval 3 to 64; it reads WTCPRCQQPV…KPCYGALFGP (62 aa). Residues 84 to 112 are disordered; sequence PGCTTPLSPSSFSPPRPRTGLPQGKKSPP. The 62-residue stretch at 122–183 folds into the LIM zinc-binding 2 domain; the sequence is SLCPGCGEPV…VPCYGYLFGP (62 aa).

As to expression, expressed in most tissues, but not in skeletal muscle.

Its subcellular location is the cytoplasm. The sequence is that of Cysteine-rich protein 3 (CRIP3) from Homo sapiens (Human).